Reading from the N-terminus, the 194-residue chain is Clathrin light chain (194 aa).

The tract at residues 44-156 (TTFDNSNNNN…TDSTSGNTTH (113 aa)) is disordered. The segment covering 48–65 (NSNNNNNNNNHNNNSYNS) has biased composition (low complexity). Composition is skewed to basic and acidic residues over residues 89–115 (EYLEKHEKEMQEKKKKSEEKRQKKIAE) and 124–146 (YSEREAKKKTALKNNRDHNKSLE). The segment at 124 to 194 (YSEREAKKKT…LIRLKNQPIV (71 aa)) is required for binding clathrin heavy chain, localization to punctae, and for cytokinesis and fruiting body development. The span at 147-156 (TDSTSGNTTH) shows a compositional bias: polar residues.

The protein belongs to the clathrin light chain family. As to quaternary structure, clathrin coats are formed from molecules containing 3 heavy chains and 3 light chains.

It is found in the cytoplasmic vesicle membrane. The protein resides in the membrane. It localises to the coated pit. Its function is as follows. Clathrin is the major protein of the polyhedral coat of coated pits and vesicles. The chain is Clathrin light chain (clc) from Dictyostelium discoideum (Social amoeba).